Consider the following 289-residue polypeptide: Splicing factor C9orf78 (289 aa).

Positions 1-12 are enriched in basic residues; that stretch reads MPVVRKIFRRRR. Residues 1-27 are disordered; that stretch reads MPVVRKIFRRRRGDSESEEDEQDSEEV. The interaction with SNRNP200 stretch occupies residues 5 to 58; it reads RKIFRRRRGDSESEEDEQDSEEVRLKLEETREVQNLRKRPNGVSAVALLVGEKV. A phosphoserine mark is found at Ser-15 and Ser-17. Position 147 is a phosphotyrosine (Tyr-147). Positions 232–283 are enriched in basic and acidic residues; it reads LNAPIRRNKEEPKARPLRVGDTEKPEPERSPPNRKRPANEKATDDYHYEKFK. Positions 232–289 are disordered; the sequence is LNAPIRRNKEEPKARPLRVGDTEKPEPERSPPNRKRPANEKATDDYHYEKFKKMNRRY. At Thr-253 the chain carries Phosphothreonine. Ser-261 is subject to Phosphoserine.

It belongs to the TLS1 family. In terms of assembly, component of the spliceosome. Interacts with SNRNP200; the interaction is direct. Interacts with PRPF8.

It is found in the nucleus. The protein resides in the chromosome. Its subcellular location is the centromere. Plays a role in pre-mRNA splicing by promoting usage of the upstream 3'-splice site at alternative NAGNAG splice sites; these are sites featuring alternative acceptor motifs separated by only a few nucleotides. May also modulate exon inclusion events. Plays a role in spliceosomal remodeling by displacing WBP4 from SNRNP200 and may act to inhibit SNRNP200 helicase activity. Binds U5 snRNA. Required for proper chromosome segregation. Not required for splicing of shelterin components. The protein is Splicing factor C9orf78 (C9orf78) of Homo sapiens (Human).